The primary structure comprises 84 residues: Large ribosomal subunit protein bL27 (84 aa).

Positions 1-22 (MAHKKAGGSTRNGRDSESKRLG) are disordered.

This sequence belongs to the bacterial ribosomal protein bL27 family.

In Shewanella denitrificans (strain OS217 / ATCC BAA-1090 / DSM 15013), this protein is Large ribosomal subunit protein bL27.